Reading from the N-terminus, the 354-residue chain is Protein RecA (354 aa).

Position 65 to 72 (65 to 72 (GPESSGKT)) interacts with ATP.

This sequence belongs to the RecA family.

It is found in the cytoplasm. In terms of biological role, can catalyze the hydrolysis of ATP in the presence of single-stranded DNA, the ATP-dependent uptake of single-stranded DNA by duplex DNA, and the ATP-dependent hybridization of homologous single-stranded DNAs. It interacts with LexA causing its activation and leading to its autocatalytic cleavage. This chain is Protein RecA, found in Pseudomonas syringae pv. syringae (strain B728a).